Consider the following 306-residue polypeptide: MITAQMVKELRERTGAGMMDCKKALNEAGGDSEKAIEILREKGLAAAAKKSGRIASEGLVKTYISEDGKVASIVEVNCETDFVAVNADFVNFVDNLAKQISLSESTTVEELSEEKYISDDSKTVSETLVNLISKLGENMAIRRFERLAVSKGLIESYIHGGGRIGVLVKLECEKESEILKEVAKDVAMQVAATNPLFLSKDTVDSATLDKEKEIFKVQALNEGKPEKIAEKIVIGRVQKYYKENCLIEQLWVKDSDLTIDKYLKSKSKEVGAPIKISNFIRFEKGEGIEKKEEDFAEEVRKQIEGK.

The segment at 80 to 83 (TDFV) is involved in Mg(2+) ion dislocation from EF-Tu.

The protein belongs to the EF-Ts family.

Its subcellular location is the cytoplasm. In terms of biological role, associates with the EF-Tu.GDP complex and induces the exchange of GDP to GTP. It remains bound to the aminoacyl-tRNA.EF-Tu.GTP complex up to the GTP hydrolysis stage on the ribosome. In Clostridium kluyveri (strain NBRC 12016), this protein is Elongation factor Ts.